The primary structure comprises 453 residues: Bis(5'-adenosyl)-triphosphatase ENPP4 (453 aa).

Positions 1–18 are cleaved as a signal peptide; sequence MKLLLMLLFSGLMTGCRG. The Extracellular portion of the chain corresponds to 19–407; the sequence is NSSSASPPKL…DQWCINLPEA (389 aa). Positions 34 and 70 each coordinate Zn(2+). T70 serves as the catalytic AMP-threonine intermediate. Residues N91 and Y154 each coordinate substrate. N166 is a glycosylation site (N-linked (GlcNAc...) asparagine). Zn(2+) contacts are provided by D189, H193, D237, and H238. D189 is a binding site for substrate. A disulfide bond links C254 and C287. The N-linked (GlcNAc...) asparagine glycan is linked to N276. H336 serves as a coordination point for Zn(2+). C394 and C401 are oxidised to a cystine. The chain crosses the membrane as a helical span at residues 408–428; sequence IGIVIGALLVLTTLTCLIIIM. The Cytoplasmic portion of the chain corresponds to 429–453; sequence QNRVSGPRPFSRLQLQEDDDDPLIG.

The protein belongs to the nucleotide pyrophosphatase/phosphodiesterase family. The cofactor is Zn(2+).

The protein localises to the cell membrane. It carries out the reaction P(1),P(3)-bis(5'-adenosyl) triphosphate + H2O = AMP + ADP + 2 H(+). Its function is as follows. Hydrolyzes extracellular Ap3A into AMP and ADP, and Ap4A into AMP and ATP. Ap3A and Ap4A are diadenosine polyphosphates thought to induce proliferation of vascular smooth muscle cells. Acts as a procoagulant, mediating platelet aggregation at the site of nascent thrombus via release of ADP from Ap3A and activation of ADP receptors. The polypeptide is Bis(5'-adenosyl)-triphosphatase ENPP4 (ENPP4) (Bos taurus (Bovine)).